Consider the following 98-residue polypeptide: MGQPSWQGDTLHLTIRVQPKAAQERVMGWQGEQLKVALNAPPVDGAANKALCHFLAKQLGIAKGQVTLVRGEKSREKQLVIQGISPSIWQQFLERHGV.

The protein belongs to the UPF0235 family.

This chain is UPF0235 protein Mmc1_3654, found in Magnetococcus marinus (strain ATCC BAA-1437 / JCM 17883 / MC-1).